The following is a 384-amino-acid chain: BarH-like 2 homeobox protein (384 aa).

3 disordered regions span residues methionine 1–threonine 134, cysteine 154–serine 237, and proline 364–arginine 384. Low complexity predominate over residues glutamine 119–threonine 134. Residues glutamate 177–serine 217 show a composition bias toward basic and acidic residues. A DNA-binding region (homeobox) is located at residues proline 229–threonine 288.

Belongs to the BAR homeobox family. Expressed in the ganglion cell layer of the retina in the eye and in the ventral zone of the dorsal thalamus of the CNS.

Its subcellular location is the nucleus. In terms of biological role, potential regulator of neural basic helix-loop-helix genes. It may down-regulate expression of ASCL1 and, within the thalamus, up-regulate NGN2, thereby regulating distinct patterns of neuronal differentiation. The protein is BarH-like 2 homeobox protein (Barhl2) of Rattus norvegicus (Rat).